The primary structure comprises 246 residues: Type III pantothenate kinase (246 aa).

Residue 6-13 (DVGNSRIK) coordinates ATP. Residues Tyr93 and 100 to 103 (GSDR) contribute to the substrate site. Asp102 functions as the Proton acceptor in the catalytic mechanism. Residue Thr125 participates in ATP binding. A substrate-binding site is contributed by Thr175.

It belongs to the type III pantothenate kinase family. Homodimer. NH4(+) is required as a cofactor. K(+) serves as cofactor.

The protein localises to the cytoplasm. It catalyses the reaction (R)-pantothenate + ATP = (R)-4'-phosphopantothenate + ADP + H(+). The protein operates within cofactor biosynthesis; coenzyme A biosynthesis; CoA from (R)-pantothenate: step 1/5. In terms of biological role, catalyzes the phosphorylation of pantothenate (Pan), the first step in CoA biosynthesis. The protein is Type III pantothenate kinase of Dichelobacter nodosus (strain VCS1703A).